The following is a 403-amino-acid chain: MARCRMPRWGLLLVLWGSCTFGLPADTGAFRRIFLKKMPSIRESLKERGVDVAGLGAEWNQFTKRLSSGNSTSPVVLTNYLDTQYYGEIGIGTPPQTFKVVFDTGSANLWVPSTRCSPLYTACEIHCLYDSSESSSYMENGTTFTIRYGSGKVKGFLSQDMVTVGGITVTQTFGEVTELPLIPFMLAKFDGVLGMGFPAQAVGGVTPVFDHILSQGVLKEEVFSVYYSRNSHLLGGEVVLGGSDPQYYQGNFHYVSISKTGSWQIKMKGVSVRSATLVCEEGCMVVVDTGASYISGPTSSLRLLMDTLGAQELSTNEYVVNCNQVPTLPDISFHLGGRAYTLTSKDYVLQDPYGNEDLCTLALHGLDVPPPTGPVWVLGASFIRKFYTEFDRHNNRIGFALAR.

The signal sequence occupies residues 1–22; the sequence is MARCRMPRWGLLLVLWGSCTFG. The propeptide at 23–65 is activation peptide; it reads LPADTGAFRRIFLKKMPSIRESLKERGVDVAGLGAEWNQFTKR. Asn70 carries N-linked (GlcNAc...) asparagine glycosylation. The Peptidase A1 domain occupies 85–400; it reads YYGEIGIGTP…DRHNNRIGFA (316 aa). Asp103 is an active-site residue. Cys116 and Cys123 are joined by a disulfide. A glycan (N-linked (GlcNAc...) asparagine) is linked at Asn140. A disulfide bond links Cys279 and Cys283. Residue Asp288 is part of the active site. The cysteines at positions 322 and 359 are disulfide-linked.

It belongs to the peptidase A1 family. Interacts with ATP6AP2.

The protein resides in the secreted. It is found in the membrane. It carries out the reaction Cleavage of Leu-|-Xaa bond in angiotensinogen to generate angiotensin I.. With respect to regulation, interaction with ATP6AP2 results in a 5-fold increased efficiency in angiotensinogen processing. In terms of biological role, renin is a highly specific endopeptidase, whose only known function is to generate angiotensin I from angiotensinogen in the plasma, initiating a cascade of reactions that produce an elevation of blood pressure and increased sodium retention by the kidney. The sequence is that of Renin (REN) from Canis lupus familiaris (Dog).